Consider the following 140-residue polypeptide: Nucleoside diphosphate kinase (140 aa).

ATP contacts are provided by Lys11, Phe59, Arg87, Thr93, Arg104, and Asn114. The active-site Pros-phosphohistidine intermediate is the His117.

Belongs to the NDK family. In terms of assembly, homotetramer. It depends on Mg(2+) as a cofactor.

Its subcellular location is the cytoplasm. The catalysed reaction is a 2'-deoxyribonucleoside 5'-diphosphate + ATP = a 2'-deoxyribonucleoside 5'-triphosphate + ADP. It catalyses the reaction a ribonucleoside 5'-diphosphate + ATP = a ribonucleoside 5'-triphosphate + ADP. Functionally, major role in the synthesis of nucleoside triphosphates other than ATP. The ATP gamma phosphate is transferred to the NDP beta phosphate via a ping-pong mechanism, using a phosphorylated active-site intermediate. In Persephonella marina (strain DSM 14350 / EX-H1), this protein is Nucleoside diphosphate kinase.